We begin with the raw amino-acid sequence, 226 residues long: ATP synthase F(0) complex subunit a (226 aa).

A run of 6 helical transmembrane segments spans residues 13-33 (VILG…LISW), 69-89 (WALL…LGLL), 97-117 (TQLS…VIMA), 138-158 (IPVL…ALGV), 179-199 (FVLL…LFLL), and 201-221 (LLEI…LSLY).

It belongs to the ATPase A chain family. In terms of assembly, component of the ATP synthase complex composed at least of ATP5F1A/subunit alpha, ATP5F1B/subunit beta, ATP5MC1/subunit c (homooctomer), MT-ATP6/subunit a, MT-ATP8/subunit 8, ATP5ME/subunit e, ATP5MF/subunit f, ATP5MG/subunit g, ATP5MK/subunit k, ATP5MJ/subunit j, ATP5F1C/subunit gamma, ATP5F1D/subunit delta, ATP5F1E/subunit epsilon, ATP5PF/subunit F6, ATP5PB/subunit b, ATP5PD/subunit d, ATP5PO/subunit OSCP. ATP synthase complex consists of a soluble F(1) head domain (subunits alpha(3) and beta(3)) - the catalytic core - and a membrane F(0) domain - the membrane proton channel (subunits c, a, 8, e, f, g, k and j). These two domains are linked by a central stalk (subunits gamma, delta, and epsilon) rotating inside the F1 region and a stationary peripheral stalk (subunits F6, b, d, and OSCP). Interacts with DNAJC30; interaction is direct.

The protein localises to the mitochondrion inner membrane. It catalyses the reaction H(+)(in) = H(+)(out). Subunit a, of the mitochondrial membrane ATP synthase complex (F(1)F(0) ATP synthase or Complex V) that produces ATP from ADP in the presence of a proton gradient across the membrane which is generated by electron transport complexes of the respiratory chain. ATP synthase complex consist of a soluble F(1) head domain - the catalytic core - and a membrane F(1) domain - the membrane proton channel. These two domains are linked by a central stalk rotating inside the F(1) region and a stationary peripheral stalk. During catalysis, ATP synthesis in the catalytic domain of F(1) is coupled via a rotary mechanism of the central stalk subunits to proton translocation. With the subunit c (ATP5MC1), forms the proton-conducting channel in the F(0) domain, that contains two crucial half-channels (inlet and outlet) that facilitate proton movement from the mitochondrial intermembrane space (IMS) into the matrix. Protons are taken up via the inlet half-channel and released through the outlet half-channel, following a Grotthuss mechanism. The polypeptide is ATP synthase F(0) complex subunit a (Xenopus laevis (African clawed frog)).